A 519-amino-acid chain; its full sequence is Dolichol kinase (519 aa).

The Cytoplasmic portion of the chain corresponds to 1–47; the sequence is MVAIIPHASFTTIKLTQKTEGSQMPTEEICKINMRTRKFDVGGNSRD. The helical transmembrane segment at 48–68 threads the bilayer; the sequence is FECFYSNFVQTVILLGTFFYC. The Lumenal segment spans residues 69–88; it reads VERLQPWSIVTADISYKQIF. A helical membrane pass occupies residues 89–109; the sequence is VNVFVVCLIMVGLIFTKYWQH. Residues 110–118 lie on the Cytoplasmic side of the membrane; it reads GYKSLPKFD. The helical transmembrane segment at 119-139 threads the bilayer; the sequence is TIYSLYLPFMVSLLFDTSSTV. Residues 140 to 151 lie on the Lumenal side of the membrane; the sequence is INTILILSVLNS. A helical transmembrane segment spans residues 152–172; sequence YRWRTQLVVIILQLCLIFFNF. Topologically, residues 173–181 are cytoplasmic; it reads EAGDRLKNI. Residues 182–203 traverse the membrane as a helical segment; it reads ISIVINSLLSLILKYIGQLKSL. The Lumenal portion of the chain corresponds to 204–223; it reads DNIDSNLFSILLTNILYVSE. The helical transmembrane segment at 224–244 threads the bilayer; the sequence is AGTVHFRILKGIILALTTIIS. Topologically, residues 245–253 are cytoplasmic; the sequence is INYVLKKVM. A helical transmembrane segment spans residues 254–274; sequence HFKPFMLSISFAIGLPLFANT. Residues 275-294 are Lumenal-facing; that stretch reads FIHLEDGENPLLWLVKYILE. The helical transmembrane segment at 295 to 315 threads the bilayer; the sequence is STIRQKILFAWSSILILSIPS. Residues 316–326 are Cytoplasmic-facing; sequence ILIEKDSLSLN. Residues 327–347 form a helical membrane-spanning segment; it reads TSRKLWHFIIFLLIIPSFQMD. The Lumenal segment spans residues 348 to 349; it reads SN. The helical transmembrane segment at 350–370 threads the bilayer; it reads FVKIALSGTIPVFLSIEYIRF. Residues 371 to 394 lie on the Cytoplasmic side of the membrane; it reads QNLPPLGSAIELQLRRFADDRDHS. The helical transmembrane segment at 395–415 threads the bilayer; it reads GPLIISYLYLLFGISTPLLMN. Residues 416–417 are Lumenal-facing; the sequence is NS. A helical membrane pass occupies residues 418 to 438; the sequence is PMGLIGLGIGDSLASIIGKRY. At 439 to 449 the chain is on the cytoplasmic side; the sequence is GRIRWKGTQKT. The chain crosses the membrane as a helical span at residues 450 to 470; that stretch reads LEGTLAFIVTSFIVCLVLLRF. Over 471-472 the chain is Lumenal; sequence DK. The chain crosses the membrane as a helical span at residues 473-493; it reads AAIFNHLTTLQLLTLCTLSGV. At 494 to 519 the chain is on the cytoplasmic side; that stretch reads LEGNSVLNDNILIPAFMMICEKLITL.

This sequence belongs to the polyprenol kinase family.

It is found in the endoplasmic reticulum membrane. It carries out the reaction a di-trans,poly-cis-dolichol + CTP = a di-trans,poly-cis-dolichyl phosphate + CDP + H(+). It participates in protein modification; protein glycosylation. Functionally, catalyzes CTP-mediated phosphorylation of dolichol, the terminal step in de novo dolichyl monophosphate (Dol-P) biosynthesis. Dol-P is a lipid carrier essential for the synthesis of N-linked and O-linked oligosaccharides and for GPI anchors. The polypeptide is Dolichol kinase (SEC59) (Saccharomyces cerevisiae (strain ATCC 204508 / S288c) (Baker's yeast)).